Here is a 786-residue protein sequence, read N- to C-terminus: Ciliated left-right organizer ZP-N domains-containing protein (786 aa).

The signal sequence occupies residues 1-18; it reads MWGSVAVVWAICLACIQP.

In terms of tissue distribution, expressed specifically by cells of the ciliated left-right organizer.

Functionally, plays a role in left-right patterning process. This Mus musculus (Mouse) protein is Ciliated left-right organizer ZP-N domains-containing protein (Ciroz).